A 334-amino-acid polypeptide reads, in one-letter code: GTPase Obg (334 aa).

The region spanning 1–159 (MKFIDQAIIH…RDIQLELMLL (159 aa)) is the Obg domain. The interval 67–86 (AQNGQNGSSRKSSGKKGDDI) is disordered. The segment covering 68-77 (QNGQNGSSRK) has biased composition (low complexity). Residues 160–333 (ADVGTLGMPN…LCSDITKYLK (174 aa)) enclose the OBG-type G domain. GTP-binding positions include 166 to 173 (GMPNVGKS), 191 to 195 (FTTLH), 213 to 216 (DIPG), 283 to 286 (NKID), and 314 to 316 (SSM). Mg(2+) is bound by residues S173 and T193.

The protein belongs to the TRAFAC class OBG-HflX-like GTPase superfamily. OBG GTPase family. Monomer. It depends on Mg(2+) as a cofactor.

Its subcellular location is the cytoplasm. An essential GTPase which binds GTP, GDP and possibly (p)ppGpp with moderate affinity, with high nucleotide exchange rates and a fairly low GTP hydrolysis rate. Plays a role in control of the cell cycle, stress response, ribosome biogenesis and in those bacteria that undergo differentiation, in morphogenesis control. The chain is GTPase Obg from Buchnera aphidicola subsp. Acyrthosiphon pisum (strain 5A).